The chain runs to 100 residues: Large ribosomal subunit protein uL23 (100 aa).

This sequence belongs to the universal ribosomal protein uL23 family. As to quaternary structure, part of the 50S ribosomal subunit. Contacts protein L29, and trigger factor when it is bound to the ribosome.

Functionally, one of the early assembly proteins it binds 23S rRNA. One of the proteins that surrounds the polypeptide exit tunnel on the outside of the ribosome. Forms the main docking site for trigger factor binding to the ribosome. The protein is Large ribosomal subunit protein uL23 of Mycobacterium sp. (strain JLS).